The primary structure comprises 145 residues: Small ribosomal subunit protein eS19 (145 aa).

Belongs to the eukaryotic ribosomal protein eS19 family. Component of the small ribosomal subunit.

It localises to the cytoplasm. The protein localises to the nucleus. Its function is as follows. Component of the small ribosomal subunit. The ribosome is a large ribonucleoprotein complex responsible for the synthesis of proteins in the cell. Required for pre-rRNA processing and maturation of 40S ribosomal subunits. In Myxine glutinosa (Atlantic hagfish), this protein is Small ribosomal subunit protein eS19 (rps19).